The primary structure comprises 511 residues: Maturase K (511 aa).

This sequence belongs to the intron maturase 2 family. MatK subfamily.

It is found in the plastid. Its subcellular location is the chloroplast. In terms of biological role, usually encoded in the trnK tRNA gene intron. Probably assists in splicing its own and other chloroplast group II introns. The polypeptide is Maturase K (Adesmia lanata).